The chain runs to 397 residues: Penicillopepsin-1 (397 aa).

The first 20 residues, 1-20, serve as a signal peptide directing secretion; the sequence is MVVFSQVTVALTCFSAIASA. Positions 21 to 71 are cleaved as a propeptide — activation peptide; it reads AAVRQEPPQGFTVNQVQKAVPGTRTVNLPGLYANALVKYGATVPATVHAAA. The 308-residue stretch at 87–394 folds into the Peptidase A1 domain; sequence YLTPVTIGSS…DSEGPRLGFA (308 aa). Active-site residues include Asp103 and Asp285. A glycan (N-linked (GlcNAc...) asparagine) is linked at Asn311. Cys322 and Cys357 are disulfide-bonded.

The protein belongs to the peptidase A1 family. Monomer.

Its subcellular location is the secreted. The catalysed reaction is Hydrolysis of proteins with broad specificity similar to that of pepsin A, preferring hydrophobic residues at P1 and P1', but also cleaving 20-Gly-|-Glu-21 in the B chain of insulin. Clots milk, and activates trypsinogen.. Secreted aspartic endopeptidase that allows assimilation of proteinaceous substrates. The scissile peptide bond is attacked by a nucleophilic water molecule activated by two aspartic residues in the active site. Shows a broad primary substrate specificity. Favors hydrophobic residues at the P1 and P1' positions, but can also activate trypsinogen and hydrolyze the B chain of insulin between positions 'Gly-20' and 'Glu-21'. The sequence is that of Penicillopepsin-1 from Penicillium roqueforti.